We begin with the raw amino-acid sequence, 110 residues long: Large ribosomal subunit protein uL22 (110 aa).

This sequence belongs to the universal ribosomal protein uL22 family. In terms of assembly, part of the 50S ribosomal subunit.

Its function is as follows. This protein binds specifically to 23S rRNA; its binding is stimulated by other ribosomal proteins, e.g. L4, L17, and L20. It is important during the early stages of 50S assembly. It makes multiple contacts with different domains of the 23S rRNA in the assembled 50S subunit and ribosome. In terms of biological role, the globular domain of the protein is located near the polypeptide exit tunnel on the outside of the subunit, while an extended beta-hairpin is found that lines the wall of the exit tunnel in the center of the 70S ribosome. This Pectobacterium atrosepticum (strain SCRI 1043 / ATCC BAA-672) (Erwinia carotovora subsp. atroseptica) protein is Large ribosomal subunit protein uL22.